Here is a 312-residue protein sequence, read N- to C-terminus: Acetylglutamate kinase (312 aa).

Residues 74–75, R96, and N195 contribute to the substrate site; that span reads GG.

This sequence belongs to the acetylglutamate kinase family. ArgB subfamily.

It is found in the cytoplasm. The catalysed reaction is N-acetyl-L-glutamate + ATP = N-acetyl-L-glutamyl 5-phosphate + ADP. It participates in amino-acid biosynthesis; L-arginine biosynthesis; N(2)-acetyl-L-ornithine from L-glutamate: step 2/4. In terms of biological role, catalyzes the ATP-dependent phosphorylation of N-acetyl-L-glutamate. The sequence is that of Acetylglutamate kinase from Nocardioides sp. (strain ATCC BAA-499 / JS614).